A 450-amino-acid polypeptide reads, in one-letter code: Serine incorporator 2 (450 aa).

The next 11 membrane-spanning stretches (helical) occupy residues 5-27, 40-57, 96-118, 131-150, 160-182, 203-225, 238-257, 264-286, 315-337, 380-402, and 417-439; these read LGAC…ILCG, LLFT…IIML, AVYR…MICV, GFWF…AFYI, FYFG…VDFA, AGLF…LMFV, VFIS…AVLP, PNSG…WSAL, VWWD…FISL, TYSY…MTLT, and WTSV…WTLV.

It belongs to the TDE1 family.

It is found in the cell membrane. It carries out the reaction a 1,2-diacyl-sn-glycero-3-phospho-L-serine(in) = a 1,2-diacyl-sn-glycero-3-phospho-L-serine(out). The enzyme catalyses a 1,2-diacyl-sn-glycero-3-phosphocholine(in) = a 1,2-diacyl-sn-glycero-3-phosphocholine(out). It catalyses the reaction a 1,2-diacyl-sn-glycero-3-phosphoethanolamine(in) = a 1,2-diacyl-sn-glycero-3-phosphoethanolamine(out). Functionally, non-ATP-dependent, non-specific lipid transporter for phosphatidylserine, phosphatidylcholine, and phosphatidylethanolamine. Functions as a scramblase that flips lipids in both directions across the membrane. In contrast to SERINC3 and SERINC5, has no effect on gammaretrovirus particles infectivity. The polypeptide is Serine incorporator 2 (Serinc2) (Mus musculus (Mouse)).